A 160-amino-acid polypeptide reads, in one-letter code: 6,7-dimethyl-8-ribityllumazine synthase (160 aa).

5-amino-6-(D-ribitylamino)uracil contacts are provided by residues phenylalanine 28, 62–64 (ALE), and 86–88 (AVI). Residue 91-92 (ET) coordinates (2S)-2-hydroxy-3-oxobutyl phosphate. The active-site Proton donor is the histidine 94. Residue asparagine 119 participates in 5-amino-6-(D-ribitylamino)uracil binding. Arginine 133 contributes to the (2S)-2-hydroxy-3-oxobutyl phosphate binding site.

It belongs to the DMRL synthase family.

The catalysed reaction is (2S)-2-hydroxy-3-oxobutyl phosphate + 5-amino-6-(D-ribitylamino)uracil = 6,7-dimethyl-8-(1-D-ribityl)lumazine + phosphate + 2 H2O + H(+). It functions in the pathway cofactor biosynthesis; riboflavin biosynthesis; riboflavin from 2-hydroxy-3-oxobutyl phosphate and 5-amino-6-(D-ribitylamino)uracil: step 1/2. In terms of biological role, catalyzes the formation of 6,7-dimethyl-8-ribityllumazine by condensation of 5-amino-6-(D-ribitylamino)uracil with 3,4-dihydroxy-2-butanone 4-phosphate. This is the penultimate step in the biosynthesis of riboflavin. The protein is 6,7-dimethyl-8-ribityllumazine synthase of Nitrosospira multiformis (strain ATCC 25196 / NCIMB 11849 / C 71).